A 233-amino-acid polypeptide reads, in one-letter code: 4'-phosphopantetheinyl transferase psf-1 (233 aa).

Positions 110, 112, and 154 each coordinate Mg(2+). A peptidyl carrier protein binding region spans residues 161–192; the sequence is GKGISYGLSSFTARLSEDGQATLRLPDHEAPC.

Belongs to the P-Pant transferase superfamily. Gsp/Sfp/HetI/AcpT family. Requires Mg(2+) as cofactor.

The catalysed reaction is apo-[peptidyl-carrier protein] + CoA = holo-[peptidyl-carrier protein] + adenosine 3',5'-bisphosphate + H(+). Its function is as follows. Probably activates the peptidyl carrier protein (PCP) domains of surfactin synthetase by transferring the 4'-phosphopantetheinyl moiety of coenzyme A (CoA) to a serine residue. Required for the production of the lipopeptide antibiotic, surfactin. The sequence is that of 4'-phosphopantetheinyl transferase psf-1 (psf-1) from Bacillus pumilus (Bacillus mesentericus).